A 302-amino-acid polypeptide reads, in one-letter code: Oxygen-dependent coproporphyrinogen-III oxidase (302 aa).

Serine 94 provides a ligand contact to substrate. Histidine 98 and histidine 108 together coordinate a divalent metal cation. The active-site Proton donor is the histidine 108. Substrate is bound at residue asparagine 110–arginine 112. A divalent metal cation contacts are provided by histidine 147 and histidine 177. The important for dimerization stretch occupies residues tyrosine 242–glutamate 277. Glycine 260–arginine 262 contributes to the substrate binding site.

It belongs to the aerobic coproporphyrinogen-III oxidase family. As to quaternary structure, homodimer. The cofactor is a divalent metal cation.

It localises to the cytoplasm. The enzyme catalyses coproporphyrinogen III + O2 + 2 H(+) = protoporphyrinogen IX + 2 CO2 + 2 H2O. Its pathway is porphyrin-containing compound metabolism; protoporphyrin-IX biosynthesis; protoporphyrinogen-IX from coproporphyrinogen-III (O2 route): step 1/1. Involved in the heme biosynthesis. Catalyzes the aerobic oxidative decarboxylation of propionate groups of rings A and B of coproporphyrinogen-III to yield the vinyl groups in protoporphyrinogen-IX. This chain is Oxygen-dependent coproporphyrinogen-III oxidase, found in Aeromonas salmonicida (strain A449).